A 296-amino-acid polypeptide reads, in one-letter code: Acetyl-coenzyme A carboxylase carboxyl transferase subunit beta (296 aa).

Residues V25 to E294 form the CoA carboxyltransferase N-terminal domain. C29, C32, C48, and C51 together coordinate Zn(2+). The segment at C29–C51 adopts a C4-type zinc-finger fold.

The protein belongs to the AccD/PCCB family. As to quaternary structure, acetyl-CoA carboxylase is a heterohexamer composed of biotin carboxyl carrier protein (AccB), biotin carboxylase (AccC) and two subunits each of ACCase subunit alpha (AccA) and ACCase subunit beta (AccD). Zn(2+) is required as a cofactor.

Its subcellular location is the cytoplasm. It catalyses the reaction N(6)-carboxybiotinyl-L-lysyl-[protein] + acetyl-CoA = N(6)-biotinyl-L-lysyl-[protein] + malonyl-CoA. It functions in the pathway lipid metabolism; malonyl-CoA biosynthesis; malonyl-CoA from acetyl-CoA: step 1/1. In terms of biological role, component of the acetyl coenzyme A carboxylase (ACC) complex. Biotin carboxylase (BC) catalyzes the carboxylation of biotin on its carrier protein (BCCP) and then the CO(2) group is transferred by the transcarboxylase to acetyl-CoA to form malonyl-CoA. The chain is Acetyl-coenzyme A carboxylase carboxyl transferase subunit beta from Haemophilus influenzae (strain PittEE).